Reading from the N-terminus, the 298-residue chain is UDP-N-acetylenolpyruvoylglucosamine reductase (298 aa).

In terms of domain architecture, FAD-binding PCMH-type spans K26–G191. R170 is a catalytic residue. The Proton donor role is filled by S220. E290 is an active-site residue.

Belongs to the MurB family. FAD is required as a cofactor.

Its subcellular location is the cytoplasm. The catalysed reaction is UDP-N-acetyl-alpha-D-muramate + NADP(+) = UDP-N-acetyl-3-O-(1-carboxyvinyl)-alpha-D-glucosamine + NADPH + H(+). Its pathway is cell wall biogenesis; peptidoglycan biosynthesis. Cell wall formation. This Lactobacillus acidophilus (strain ATCC 700396 / NCK56 / N2 / NCFM) protein is UDP-N-acetylenolpyruvoylglucosamine reductase.